We begin with the raw amino-acid sequence, 888 residues long: Alanine--tRNA ligase (888 aa).

Residues H564, H568, C676, and H680 each contribute to the Zn(2+) site.

This sequence belongs to the class-II aminoacyl-tRNA synthetase family. The cofactor is Zn(2+).

The protein resides in the cytoplasm. It catalyses the reaction tRNA(Ala) + L-alanine + ATP = L-alanyl-tRNA(Ala) + AMP + diphosphate. Functionally, catalyzes the attachment of alanine to tRNA(Ala) in a two-step reaction: alanine is first activated by ATP to form Ala-AMP and then transferred to the acceptor end of tRNA(Ala). Also edits incorrectly charged Ser-tRNA(Ala) and Gly-tRNA(Ala) via its editing domain. The polypeptide is Alanine--tRNA ligase (Mesorhizobium japonicum (strain LMG 29417 / CECT 9101 / MAFF 303099) (Mesorhizobium loti (strain MAFF 303099))).